Here is a 205-residue protein sequence, read N- to C-terminus: Thymidylate kinase (205 aa).

7–14 contacts ATP; the sequence is GIDGSGKT.

Belongs to the thymidylate kinase family.

It carries out the reaction dTMP + ATP = dTDP + ADP. In terms of biological role, phosphorylation of dTMP to form dTDP in both de novo and salvage pathways of dTTP synthesis. This Wolbachia sp. subsp. Brugia malayi (strain TRS) protein is Thymidylate kinase.